Here is a 722-residue protein sequence, read N- to C-terminus: Golgin subfamily A member 5 (722 aa).

Residues 1-689 (MSWFTDLAGR…IFLRRYPIAR (689 aa)) are Cytoplasmic-facing. Disordered regions lie at residues 90–158 (TRSS…VKPI) and 194–215 (TLSDSGSSASLSTTGDPKSHEL). Positions 91-109 (RSSIESSHNSSVNVSSHRS) are enriched in low complexity. Residues 134 to 148 (DKVHSSSQKETRKES) are compositionally biased toward basic and acidic residues. Over residues 149-158 (ASVNQAVKPI) the composition is skewed to polar residues. A compositionally biased stretch (low complexity) spans 195–209 (LSDSGSSASLSTTGD). A coiled-coil region spans residues 211–622 (KSHELSNLRL…LEHQLKNVQG (412 aa)). Residues 690–710 (VFIIIYMALLHLWVMIVLLTY) form a helical; Anchor for type IV membrane protein membrane-spanning segment. Topologically, residues 711–722 (TPEMHHDTPSGK) are lumenal.

The protein resides in the golgi apparatus membrane. Functionally, involved in maintaining Golgi structure. Stimulates the formation of Golgi stacks and ribbons. Involved in intra-Golgi retrograde transport. The chain is Golgin subfamily A member 5 (golga5) from Xenopus laevis (African clawed frog).